Consider the following 229-residue polypeptide: Small ribosomal subunit protein uS3 (229 aa).

The KH type-2 domain occupies 38-106 (IREYIENKLF…KVHINVMEVK (69 aa)). A compositionally biased stretch (acidic residues) spans 208 to 217 (PEVDENEETK). The disordered stretch occupies residues 208 to 229 (PEVDENEETKEENKEKSEEKSE). Over residues 218–229 (EENKEKSEEKSE) the composition is skewed to basic and acidic residues.

This sequence belongs to the universal ribosomal protein uS3 family. In terms of assembly, part of the 30S ribosomal subunit. Forms a tight complex with proteins S10 and S14.

Binds the lower part of the 30S subunit head. Binds mRNA in the 70S ribosome, positioning it for translation. The chain is Small ribosomal subunit protein uS3 from Natranaerobius thermophilus (strain ATCC BAA-1301 / DSM 18059 / JW/NM-WN-LF).